A 583-amino-acid polypeptide reads, in one-letter code: Aspartate--tRNA(Asp/Asn) ligase (583 aa).

Residue Glu-171 coordinates L-aspartate. Positions 195 to 198 are aspartate; the sequence is QLFK. L-aspartate is bound at residue Arg-217. ATP contacts are provided by residues 217–219 and Gln-226; that span reads RDE. Position 443 (His-443) interacts with L-aspartate. Position 476 (Glu-476) interacts with ATP. An L-aspartate-binding site is contributed by Arg-483. Residue 528-531 coordinates ATP; it reads GLDR.

This sequence belongs to the class-II aminoacyl-tRNA synthetase family. Type 1 subfamily. In terms of assembly, homodimer.

It is found in the cytoplasm. It catalyses the reaction tRNA(Asx) + L-aspartate + ATP = L-aspartyl-tRNA(Asx) + AMP + diphosphate. Functionally, aspartyl-tRNA synthetase with relaxed tRNA specificity since it is able to aspartylate not only its cognate tRNA(Asp) but also tRNA(Asn). Reaction proceeds in two steps: L-aspartate is first activated by ATP to form Asp-AMP and then transferred to the acceptor end of tRNA(Asp/Asn). This Ruthia magnifica subsp. Calyptogena magnifica protein is Aspartate--tRNA(Asp/Asn) ligase.